Consider the following 823-residue polypeptide: Pentatricopeptide repeat-containing protein At4g33990 (823 aa).

PPR repeat units lie at residues 85–115 (NVCI…IQNR), 116–151 (DVYA…GLTP), 152–183 (DYRT…GFMW), 184–214 (DVYV…MPVR), 215–249 (DMGS…DSVT), 252–280 (SLLS…GLES), 281–311 (ELFV…MYVR), 312–346 (DLIS…RIQP), 347–381 (DCLT…GWFL), 383–413 (DITI…LPNT), 414–448 (DVIS…GEIA), 450–484 (NQGT…GLYL), 485–515 (DVFV…IPRV), 516–550 (NSVP…GVKP), 551–581 (DHIT…MQTD), and 587–617 (SLKH…MSLQ). The segment at 622–697 (IWGALLSACR…TPGWSSMEVD (76 aa)) is type E motif. Residues 698 to 728 (NKVEVFYTGNQTHPMYEEMYRELTALQAKLK) form a type E(+) motif region. Residues 729-823 (MIGYVPDHRF…NGVCSCGDYW (95 aa)) form a type DYW motif region.

This sequence belongs to the PPR family. PCMP-H subfamily.

The sequence is that of Pentatricopeptide repeat-containing protein At4g33990 (EMB2758) from Arabidopsis thaliana (Mouse-ear cress).